The following is a 65-amino-acid chain: MAMAIDGYECTVCGDCKPVCPTGSIVLQGGIYVIDADSCNECADLGEPRCLGVCPVDFCIQPLDD.

2 consecutive 4Fe-4S ferredoxin-type domains span residues 2–29 (AMAIDGYECTVCGDCKPVCPTGSIVLQG) and 30–65 (GIYVIDADSCNECADLGEPRCLGVCPVDFCIQPLDD). The [4Fe-4S] cluster site is built by cysteine 10, cysteine 13, cysteine 16, cysteine 20, cysteine 39, cysteine 42, cysteine 50, and cysteine 54.

It depends on [4Fe-4S] cluster as a cofactor.

The chain is Ferredoxin-like protein in vnf region from Azotobacter chroococcum mcd 1.